We begin with the raw amino-acid sequence, 463 residues long: Cytochrome P450 4d8 (463 aa).

2 residues coordinate heme: E267 and C409.

It belongs to the cytochrome P450 family. The cofactor is heme.

The protein resides in the endoplasmic reticulum membrane. The protein localises to the microsome membrane. In terms of biological role, may be involved in the metabolism of insect hormones and in the breakdown of synthetic insecticides. The sequence is that of Cytochrome P450 4d8 (Cyp4d8) from Drosophila melanogaster (Fruit fly).